Reading from the N-terminus, the 206-residue chain is Sclerostin domain-containing protein 1 (206 aa).

Residues 1–23 (MLPPAIHFYLLPLACILMKSCLA) form the signal peptide. Asn-47 carries an N-linked (GlcNAc...) asparagine glycan. Cystine bridges form between Cys-75-Cys-133, Cys-89-Cys-147, Cys-100-Cys-163, and Cys-104-Cys-165. Residues 75–170 (CRELRSTKYI…TACKCKRYTR (96 aa)) enclose the CTCK domain. Asn-173 carries an N-linked (GlcNAc...) asparagine glycan. The tract at residues 176 to 206 (SHNFESMSPAKPVQHHRERKRASKSSKHSMS) is disordered. The span at 188 to 206 (VQHHRERKRASKSSKHSMS) shows a compositional bias: basic residues.

This sequence belongs to the sclerostin family. As to quaternary structure, interacts with BMP2, BMP4, BMP6 and BMP7 with high affinity.

The protein resides in the secreted. Its function is as follows. Directly antagonizes activity of BMP2, BMP4, BMP6 and BMP7 in a dose-dependent manner. Enhances Wnt signaling and inhibits TGF-beta signaling. May be involved in the onset of endometrial receptivity for implantation/sensitization for the decidual cell reaction. The chain is Sclerostin domain-containing protein 1 (SOSTDC1) from Pongo abelii (Sumatran orangutan).